The following is a 443-amino-acid chain: Phosphoglucosamine mutase (443 aa).

S100 acts as the Phosphoserine intermediate in catalysis. Mg(2+) contacts are provided by S100, D239, D241, and D243. At S100 the chain carries Phosphoserine.

The protein belongs to the phosphohexose mutase family. It depends on Mg(2+) as a cofactor. In terms of processing, activated by phosphorylation.

The catalysed reaction is alpha-D-glucosamine 1-phosphate = D-glucosamine 6-phosphate. Its function is as follows. Catalyzes the conversion of glucosamine-6-phosphate to glucosamine-1-phosphate. The sequence is that of Phosphoglucosamine mutase from Shewanella loihica (strain ATCC BAA-1088 / PV-4).